A 424-amino-acid chain; its full sequence is Enolase (424 aa).

Residue Q162 participates in (2R)-2-phosphoglycerate binding. E204 serves as the catalytic Proton donor. Residues D241, E284, and D311 each contribute to the Mg(2+) site. (2R)-2-phosphoglycerate contacts are provided by K336, R365, S366, and K387. K336 functions as the Proton acceptor in the catalytic mechanism.

It belongs to the enolase family. Mg(2+) is required as a cofactor.

The protein resides in the cytoplasm. It localises to the secreted. It is found in the cell surface. The catalysed reaction is (2R)-2-phosphoglycerate = phosphoenolpyruvate + H2O. It participates in carbohydrate degradation; glycolysis; pyruvate from D-glyceraldehyde 3-phosphate: step 4/5. In terms of biological role, catalyzes the reversible conversion of 2-phosphoglycerate (2-PG) into phosphoenolpyruvate (PEP). It is essential for the degradation of carbohydrates via glycolysis. The chain is Enolase from Rhizobium leguminosarum bv. trifolii (strain WSM2304).